Here is a 431-residue protein sequence, read N- to C-terminus: Enolase (431 aa).

A (2R)-2-phosphoglycerate-binding site is contributed by glutamine 167. Glutamate 209 functions as the Proton donor in the catalytic mechanism. Residues aspartate 246, glutamate 289, and aspartate 316 each coordinate Mg(2+). (2R)-2-phosphoglycerate contacts are provided by lysine 341, arginine 370, serine 371, and lysine 392. The active-site Proton acceptor is the lysine 341.

The protein belongs to the enolase family. In terms of assembly, component of the RNA degradosome, a multiprotein complex involved in RNA processing and mRNA degradation. Mg(2+) serves as cofactor.

It localises to the cytoplasm. Its subcellular location is the secreted. It is found in the cell surface. It carries out the reaction (2R)-2-phosphoglycerate = phosphoenolpyruvate + H2O. Its pathway is carbohydrate degradation; glycolysis; pyruvate from D-glyceraldehyde 3-phosphate: step 4/5. In terms of biological role, catalyzes the reversible conversion of 2-phosphoglycerate (2-PG) into phosphoenolpyruvate (PEP). It is essential for the degradation of carbohydrates via glycolysis. This is Enolase from Hahella chejuensis (strain KCTC 2396).